Consider the following 444-residue polypeptide: Platelet-activating factor acetylhydrolase (444 aa).

The signal sequence occupies residues 1-21 (MLPSKLHALFCLCTCLALVYP). 2 N-linked (GlcNAc...) asparagine glycosylation sites follow: N60 and N200. The active-site Nucleophile is the S274. Residues D297 and H352 each act as charge relay system in the active site. Residues N424 and N434 are each glycosylated (N-linked (GlcNAc...) asparagine).

Belongs to the AB hydrolase superfamily. Lipase family. In terms of processing, N-glycosylated. Plasma.

The protein resides in the secreted. It localises to the extracellular space. The enzyme catalyses a 1-O-alkyl-2-acetyl-sn-glycero-3-phosphocholine + H2O = a 1-O-alkyl-sn-glycero-3-phosphocholine + acetate + H(+). The catalysed reaction is 1-O-decyl-2-acetyl-sn-glycero-3-phosphocholine + H2O = 1-O-decyl-sn-glycero-3-phosphocholine + acetate + H(+). It carries out the reaction 1-O-dodecyl-2-acetyl-sn-glycero-3-phosphocholine + H2O = 1-O-dodecyl-sn-glycero-3-phosphocholine + acetate + H(+). It catalyses the reaction 1-O-tetradecyl-2-acetyl-sn-glycero-3-phosphocholine + H2O = 1-O-tetradecyl-sn-glycero-3-phosphocholine + acetate + H(+). The enzyme catalyses 1-O-hexadecyl-2-acetyl-sn-glycero-3-phosphocholine + H2O = 1-O-hexadecyl-sn-glycero-3-phosphocholine + acetate + H(+). The catalysed reaction is 1-O-octadecyl-2-acetyl-sn-glycero-3-phosphocholine + H2O = 1-O-octadecyl-sn-glycero-3-phosphocholine + acetate + H(+). It carries out the reaction 1-hexadecanoyl-2-acetyl-sn-glycero-3-phosphocholine + H2O = 1-hexadecanoyl-sn-glycero-3-phosphocholine + acetate + H(+). It catalyses the reaction 1-hexadecanoyl-2-propionyl-sn-glycero-3-phosphocholine + H2O = propanoate + 1-hexadecanoyl-sn-glycero-3-phosphocholine + H(+). The enzyme catalyses 1-hexadecanoyl-2-butanoyl-sn-glycero-3-phosphocholine + H2O = butanoate + 1-hexadecanoyl-sn-glycero-3-phosphocholine + H(+). The catalysed reaction is 1-hexadecanoyl-2-pentanoyl-sn-glycero-3-phosphocholine + H2O = pentanoate + 1-hexadecanoyl-sn-glycero-3-phosphocholine + H(+). It carries out the reaction 1-hexadecanoyl-2-glutaroyl-sn-glycero-3-phosphocholine + H2O = glutarate + 1-hexadecanoyl-sn-glycero-3-phosphocholine + H(+). It catalyses the reaction 1-hexadecanoyl-2-(5-oxopentanoyl)-sn-glycero-3-phosphocholine + H2O = 5-oxopentanoate + 1-hexadecanoyl-sn-glycero-3-phosphocholine + H(+). The enzyme catalyses 1-hexadecanoyl-2-(9-oxononanoyl)-sn-glycero-3-phosphocholine + H2O = 9-oxononanoate + 1-hexadecanoyl-sn-glycero-3-phosphocholine + H(+). The catalysed reaction is 1-hexadecanoyl-2-[9-hydroperoxy-(10E-octadecenoyl)]-sn-glycero-3-phosphocholine + H2O = 9-hydroperoxy-10E-octadecenoate + 1-hexadecanoyl-sn-glycero-3-phosphocholine + H(+). It carries out the reaction 1-hexadecanoyl-2-(10-hydroperoxy-8E-octadecenoyl)-sn-glycero-3-phosphocholine + H2O = 10-hydroperoxy-(8E)-octadecenoate + 1-hexadecanoyl-sn-glycero-3-phosphocholine + H(+). Lipoprotein-associated calcium-independent phospholipase A2 involved in phospholipid catabolism during inflammatory and oxidative stress response. At the lipid-aqueous interface, hydrolyzes the ester bond of fatty acyl group attached at sn-2 position of phospholipids (phospholipase A2 activity). Specifically targets phospholipids with a short-chain fatty acyl group at sn-2 position. Can hydrolyze phospholipids with long fatty acyl chains, only if they carry oxidized functional groups. Hydrolyzes and inactivates platelet-activating factor (PAF, 1-O-alkyl-2-acetyl-sn-glycero-3-phosphocholine), a potent pro-inflammatory signaling lipid that acts through PTAFR on various innate immune cells. Hydrolyzes oxidatively truncated phospholipids carrying an aldehyde group at omega position, preventing their accumulation in low-density lipoprotein (LDL) particles and uncontrolled pro-inflammatory effects. As part of high-density lipoprotein (HDL) particles, can hydrolyze phospholipids having long-chain fatty acyl hydroperoxides at sn-2 position and protect against potential accumulation of these oxylipins in the vascular wall. Catalyzes the release from membrane phospholipids of F2-isoprostanes, lipid biomarkers of cellular oxidative damage. The chain is Platelet-activating factor acetylhydrolase (PLA2G7) from Bos taurus (Bovine).